The chain runs to 217 residues: MVFPKLIWMGFFCHLCRGYFDGPLYPEMSNGTLHHYFVPDGDYEENDDPEKCQLLFRVSDRRRCSQGEGGQASSLLSLTLREEFTVLGRQVEDAGRVLEGISKSISYDLDGEESYGKYLRRESHQIGDAYSNSDKSLTELESKFKQGQEQDSRQESRLNEDFLGMLVHTRSLLKETLDISVGLRDKYELLAHTIRSHGTRLGRLKSDYLEGGAQKTG.

The first 18 residues, M1–G18, serve as a signal peptide directing secretion. A glycan (N-linked (GlcNAc...) asparagine) is linked at N30.

This sequence belongs to the FIBIN family. As to quaternary structure, homodimer; disulfide-linked. Seems to also exist as monomers.

It is found in the secreted. The protein localises to the golgi apparatus. The protein resides in the endoplasmic reticulum. This chain is Fin bud initiation factor homolog (Fibin), found in Mus musculus (Mouse).